A 61-amino-acid chain; its full sequence is UPF0434 protein Bpet2671 (61 aa).

It belongs to the UPF0434 family.

This is UPF0434 protein Bpet2671 from Bordetella petrii (strain ATCC BAA-461 / DSM 12804 / CCUG 43448).